The chain runs to 167 residues: uncharacterized protein (167 aa).

This sequence to A.thaliana At2g20940.

This is an uncharacterized protein from Schizosaccharomyces pombe (strain 972 / ATCC 24843) (Fission yeast).